The chain runs to 337 residues: Methionyl-tRNA formyltransferase (337 aa).

110–113 serves as a coordination point for (6S)-5,6,7,8-tetrahydrofolate; the sequence is SLLP.

Belongs to the Fmt family.

The catalysed reaction is L-methionyl-tRNA(fMet) + (6R)-10-formyltetrahydrofolate = N-formyl-L-methionyl-tRNA(fMet) + (6S)-5,6,7,8-tetrahydrofolate + H(+). In terms of biological role, attaches a formyl group to the free amino group of methionyl-tRNA(fMet). The formyl group appears to play a dual role in the initiator identity of N-formylmethionyl-tRNA by promoting its recognition by IF2 and preventing the misappropriation of this tRNA by the elongation apparatus. The sequence is that of Methionyl-tRNA formyltransferase from Frankia casuarinae (strain DSM 45818 / CECT 9043 / HFP020203 / CcI3).